A 123-amino-acid polypeptide reads, in one-letter code: Small ribosomal subunit protein uS13c (123 aa).

The segment at 99–123 (GQRTRSNARTRRGAKKTVAGKKLAK) is disordered. The segment covering 100-123 (QRTRSNARTRRGAKKTVAGKKLAK) has biased composition (basic residues).

The protein belongs to the universal ribosomal protein uS13 family. As to quaternary structure, part of the 30S ribosomal subunit.

Its subcellular location is the plastid. The protein localises to the chloroplast. Located at the top of the head of the 30S subunit, it contacts several helices of the 16S rRNA. In Cyanidioschyzon merolae (strain NIES-3377 / 10D) (Unicellular red alga), this protein is Small ribosomal subunit protein uS13c.